The chain runs to 356 residues: MAEPLLTEHQHQPQTSNCTGAAVVHEEHTSERPPSAEERVPKEDSRWQSRASLQSGSRPGQEGEGGLKHQLPPLQTNACPELSSLEKGEKGQNGEDLSTGGASPSAEGEPMSESLVQPGHDSEATKQEAPAAGGEEPWGQQQRQLGKKKHRRRPSKKKRHWKPYYKLTWEEKKKFDEKQSLRASRVRAEMFAKGQPVAPYNTTQFLMDDHDQEEPDLKTGLYPKRAAAKSDDTSDEDFVEEAGEEDGGSDGMGGDGSEFLQRDFSETYERYHAESLQNMSKQELIKEYLELEKCLSRKEDENNRLRLESKRLGGVDARVRELELELDRLRAENLQLLTENELHRQQERAPLSKFGD.

Composition is skewed to basic and acidic residues over residues 1-11 (MAEPLLTEHQH) and 24-47 (VHEE…DSRW). The disordered stretch occupies residues 1–162 (MAEPLLTEHQ…RPSKKKRHWK (162 aa)). Positions 48–58 (QSRASLQSGSR) are enriched in polar residues. The span at 84–93 (SLEKGEKGQN) shows a compositional bias: basic and acidic residues. Residues S98 and S103 each carry the phosphoserine modification. Residues 145–162 (LGKKKHRRRPSKKKRHWK) are compositionally biased toward basic residues. The tract at residues 147 to 174 (KKKHRRRPSKKKRHWKPYYKLTWEEKKK) is basic region; mediates nuclear localization and interaction with 7SK snRNA and NR3C1. The tract at residues 199–202 (PYNT) is interaction with P-TEFb. The autoinhibitory acidic region; in absence of 7SK snRNA interacts with the basic region preventing interaction with P-TEFb and modulating subcellular localization stretch occupies residues 207 to 247 (MDDHDQEEPDLKTGLYPKRAAAKSDDTSDEDFVEEAGEEDG). The interval 210–259 (HDQEEPDLKTGLYPKRAAAKSDDTSDEDFVEEAGEEDGGSDGMGGDGSEF) is disordered. A Phosphoserine modification is found at S230. T233 carries the phosphothreonine modification. Positions 233–248 (TSDEDFVEEAGEEDGG) are enriched in acidic residues. 3 positions are modified to phosphoserine: S234, S249, and S257. Residues 280–346 (SKQELIKEYL…LTENELHRQQ (67 aa)) adopt a coiled-coil conformation. Residues 283 to 311 (ELIKEYLELEKCLSRKEDENNRLRLESKR) are mediates interaction with CCNT1. Positions 307 to 352 (LESKRLGGVDARVRELELELDRLRAENLQLLTENELHRQQERAPLS) are required for inhibition of ESR1-dependent transcription.

This sequence belongs to the HEXIM family. Homooligomer and heterooligomer with HEXIM2; probably dimeric. Core component of the 7SK RNP complex, at least composed of 7SK RNA, LARP7, MEPCE, HEXIM1 (or HEXIM2) and P-TEFb (composed of CDK9 and CCNT1/cyclin-T1). Interacts with the N-CoR complex through NCOR1. Interacts with ESR1 and NR3C1. May interact with NF-kappa-B through RELA. Interacts with CCNT2; mediates formation of a tripartite complex with KPNA2. Part of the HDP-RNP complex composed of at least HEXIM1, PRKDC, XRCC5, XRCC6, paraspeckle proteins (SFPQ, NONO, PSPC1, RBM14, and MATR3) and NEAT1 non-coding RNA. In terms of tissue distribution, widely expressed with higher expression in heart, skeletal muscle and brain (at protein level).

The protein resides in the nucleus. Its subcellular location is the cytoplasm. Functionally, transcriptional regulator which functions as a general RNA polymerase II transcription inhibitor. Core component of the 7SK RNP complex: in cooperation with 7SK snRNA sequesters P-TEFb in a large inactive 7SK snRNP complex preventing RNA polymerase II phosphorylation and subsequent transcriptional elongation. May also regulate NF-kappa-B, ESR1, NR3C1 and CIITA-dependent transcriptional activity. Plays a role in the regulation of DNA virus-mediated innate immune response by assembling into the HDP-RNP complex, a complex that serves as a platform for IRF3 phosphorylation and subsequent innate immune response activation through the cGAS-STING pathway. This Mus musculus (Mouse) protein is Protein HEXIM1 (Hexim1).